The following is a 402-amino-acid chain: MSRVSQARNLGKYFLLIDNMLVVLGFFVVFPLISIRFVDQMGWAALMVGIALGLRQFIQQGLGIFGGAIADRFGAKPMIVTGMLMRAAGFATMGIAHEPWLLWFSCFLSGLGGTLFDPPRSALVVKLIRPEQRGRFFSLLMMQDSAGAVTGALLGSWLLQYDFRLVCATGAVLFVLCAAFNAWLLPAWKLSTVKIPVREGMGRVMADKRFVTYVLTLAGYYMLAVQVMLMLPIMVNDIAGSPSAVKWMYAIEACLSLTLLYPIARWSEKRFRLEHRLMAGLLLMSLSMLPVGLVGNLQQLFTLICTFYIGSVIAEPARETLSASLADARARGSYMGFSRLGLAIGGAIGYIGGGWLFDMGKALQQPELPWMMLGVIGIMTFLALGWQFSHKRTPRGMLEPGA.

The next 11 membrane-spanning stretches (helical) occupy residues 13-33, 45-65, 99-116, 139-159, 165-185, 214-234, 244-264, 277-297, 300-322, 340-360, and 368-388; these read YFLL…FPLI, ALMV…LGIF, PWLL…GTLF, LLMM…SWLL, LVCA…AWLL, VLTL…LPIM, AVKW…YPIA, LMAG…VGNL, LFTL…ETLS, LGLA…FDMG, and LPWM…GWQF.

This sequence belongs to the major facilitator superfamily. DHA1 family. MdtH (TC 2.A.1.2.21) subfamily.

It is found in the cell inner membrane. The sequence is that of Multidrug resistance protein MdtH from Citrobacter koseri (strain ATCC BAA-895 / CDC 4225-83 / SGSC4696).